The primary structure comprises 216 residues: MMSAEPRTVSTPAPSTPIIGVIGPPCSGKSTVARHLESLGGVWLNADEIAKSQLSDSAVIGELKSLFGDSIQMADCSLSRSRLADLVFGDDEASHARLRQLEGILHPRTRKILQSEIAKAKSERRPFVILDVPLLLESGYRDTCDEVWCLQVNPDRHQQLLASRGWNTEELERRSARQWSWKRKQSASTRVISNNGTEEELRRLVESELASVLQSK.

Positions 18-216 constitute a DPCK domain; sequence IIGVIGPPCS…SELASVLQSK (199 aa). 26–31 provides a ligand contact to ATP; that stretch reads CSGKST.

It belongs to the CoaE family.

It localises to the cytoplasm. It carries out the reaction 3'-dephospho-CoA + ATP = ADP + CoA + H(+). It participates in cofactor biosynthesis; coenzyme A biosynthesis; CoA from (R)-pantothenate: step 5/5. Functionally, catalyzes the phosphorylation of the 3'-hydroxyl group of dephosphocoenzyme A to form coenzyme A. This chain is Dephospho-CoA kinase, found in Rhodopirellula baltica (strain DSM 10527 / NCIMB 13988 / SH1).